The sequence spans 137 residues: NADH-ubiquinone oxidoreductase chain 3 (137 aa).

3 helical membrane passes run 6 to 26, 57 to 77, and 86 to 106; these read LFIL…LIFA, FFIF…TFPF, and IYGL…FVYE.

Belongs to the complex I subunit 3 family.

It is found in the mitochondrion membrane. It carries out the reaction a ubiquinone + NADH + 5 H(+)(in) = a ubiquinol + NAD(+) + 4 H(+)(out). In terms of biological role, core subunit of the mitochondrial membrane respiratory chain NADH dehydrogenase (Complex I) that is believed to belong to the minimal assembly required for catalysis. Complex I functions in the transfer of electrons from NADH to the respiratory chain. The immediate electron acceptor for the enzyme is believed to be ubiquinone. This chain is NADH-ubiquinone oxidoreductase chain 3 (ND3), found in Podospora anserina (strain S / ATCC MYA-4624 / DSM 980 / FGSC 10383) (Pleurage anserina).